Reading from the N-terminus, the 676-residue chain is Kojibiose hydrolase (676 aa).

A signal peptide spans 1 to 20 (MNKGIIQLLALSLFCISVKA). Glu469 acts as the Proton donor in catalysis. The active-site Proton acceptor is Glu613.

Belongs to the glycosyl hydrolase 65 family.

The catalysed reaction is kojibiose + H2O = beta-D-glucose + D-glucose. In terms of biological role, glycosidase that specifically hydrolyzes kojibiose to beta-glucose and glucose. Besides its activity on kojibiose, is also able to act on alpha-1,2-oligoglucans with a higher degree of polymerization. Shows weak activity on nigerose, but is not capable of breaking down trehalose, maltose, isomaltose, sucrose, isomaltulose, turanose or melezitose. This Mucilaginibacter mallensis protein is Kojibiose hydrolase.